The sequence spans 508 residues: Lysine--tRNA ligase (508 aa).

Glutamate 418 and glutamate 425 together coordinate Mg(2+).

The protein belongs to the class-II aminoacyl-tRNA synthetase family. In terms of assembly, homodimer. It depends on Mg(2+) as a cofactor.

The protein localises to the cytoplasm. It carries out the reaction tRNA(Lys) + L-lysine + ATP = L-lysyl-tRNA(Lys) + AMP + diphosphate. The sequence is that of Lysine--tRNA ligase from Burkholderia vietnamiensis (strain G4 / LMG 22486) (Burkholderia cepacia (strain R1808)).